Consider the following 130-residue polypeptide: MQAPWAGNRGWAGTREEVRDMSEHVTRSQSSERGNDQESSQPVGPVIVQQPTEEKRQEEEPPTDNQGIAPSGEIKNEGAPAVQGTDVEAFQQELALLKIEDAPGDGPDVREGTLPTFDPTKVLEAGEGQL.

Disordered regions lie at residues 1–88 (MQAP…TDVE) and 101–130 (DAPG…EGQL). Basic and acidic residues predominate over residues 14–26 (TREEVRDMSEHVT). Over residues 27–42 (RSQSSERGNDQESSQP) the composition is skewed to polar residues. Phosphothreonine occurs at positions 113 and 116.

The protein belongs to the GAGE family.

This is P antigen family member 5 (PAGE5) from Homo sapiens (Human).